The primary structure comprises 186 residues: Proline-rich protein 3 (186 aa).

The interval 1–97 is disordered; it reads MPKRKKQNQP…LGPRSSPYGR (97 aa). 2 stretches are compositionally biased toward pro residues: residues 33–44 and 67–79; these read MGPPSLLGPPPM and MIPP…PPPR. A C3H1-type zinc finger spans residues 153 to 181; the sequence is KSDRPVCRHFSKKGHCRYEDHCAFYHPGV.

The polypeptide is Proline-rich protein 3 (Prr3) (Rattus norvegicus (Rat)).